Consider the following 219-residue polypeptide: Large ribosomal subunit protein eL13 (219 aa).

Residues 198 to 219 (KDAAENPDDVTKAPTAVKRNKT) are disordered.

This sequence belongs to the eukaryotic ribosomal protein eL13 family. Component of the 60S large ribosomal subunit (LSU).

The protein localises to the cytoplasm. Its function is as follows. Component of the ribosome, a large ribonucleoprotein complex responsible for the synthesis of proteins in the cell. The small ribosomal subunit (SSU) binds messenger RNAs (mRNAs) and translates the encoded message by selecting cognate aminoacyl-transfer RNA (tRNA) molecules. The large subunit (LSU) contains the ribosomal catalytic site termed the peptidyl transferase center (PTC), which catalyzes the formation of peptide bonds, thereby polymerizing the amino acids delivered by tRNAs into a polypeptide chain. The nascent polypeptides leave the ribosome through a tunnel in the LSU and interact with protein factors that function in enzymatic processing, targeting, and the membrane insertion of nascent chains at the exit of the ribosomal tunnel. As part of the LSU, it is probably required for its formation and the maturation of rRNAs. The polypeptide is Large ribosomal subunit protein eL13 (RpL13) (Spodoptera frugiperda (Fall armyworm)).